We begin with the raw amino-acid sequence, 275 residues long: MALVKVKPTSPGRRGVVQVVNASLHKGKPFAALVEAKSGNAGRNNNGRITVRHQGGGHKQAYRVIDFKRNKDGIPAKVERLEYDPNRTANIALLCYADGERRYIIANKGMVVGQPIMSGSEAPIKSGNALPIRNIPVGTTICCVEMLPGKGAQLARSAGTSVQLLAREGTYAQIRLRSGEVRRVHVECRATIGEVGNEEHNLRKIGKAGAMRWRGVRPTVRGTAMNPVDHPHGGGEGRTGEGRVPVNPWGQPTKGYRTRSNKRTNSMIVQRRHKR.

The tract at residues 221–275 (RGTAMNPVDHPHGGGEGRTGEGRVPVNPWGQPTKGYRTRSNKRTNSMIVQRRHKR) is disordered. Basic and acidic residues predominate over residues 229-241 (DHPHGGGEGRTGE).

Belongs to the universal ribosomal protein uL2 family. In terms of assembly, part of the 50S ribosomal subunit. Forms a bridge to the 30S subunit in the 70S ribosome.

Its function is as follows. One of the primary rRNA binding proteins. Required for association of the 30S and 50S subunits to form the 70S ribosome, for tRNA binding and peptide bond formation. It has been suggested to have peptidyltransferase activity; this is somewhat controversial. Makes several contacts with the 16S rRNA in the 70S ribosome. This chain is Large ribosomal subunit protein uL2, found in Dechloromonas aromatica (strain RCB).